Reading from the N-terminus, the 218-residue chain is Cytochrome c biogenesis ATP-binding export protein CcmA (218 aa).

The region spanning 12 to 217 is the ABC transporter domain; sequence LHAEQLSSIR…KLSLEYRGEV (206 aa). Residue 44-51 participates in ATP binding; that stretch reads GPNGAGKS.

The protein belongs to the ABC transporter superfamily. CcmA exporter (TC 3.A.1.107) family. As to quaternary structure, the complex is composed of two ATP-binding proteins (CcmA) and two transmembrane proteins (CcmB).

The protein resides in the cell inner membrane. The catalysed reaction is heme b(in) + ATP + H2O = heme b(out) + ADP + phosphate + H(+). Part of the ABC transporter complex CcmAB involved in the biogenesis of c-type cytochromes; once thought to export heme, this seems not to be the case, but its exact role is uncertain. Responsible for energy coupling to the transport system. In Idiomarina loihiensis (strain ATCC BAA-735 / DSM 15497 / L2-TR), this protein is Cytochrome c biogenesis ATP-binding export protein CcmA.